Consider the following 142-residue polypeptide: Fluoride-specific ion channel FluC 1 (142 aa).

Helical transmembrane passes span Ala-17–Leu-37, Gly-42–Ala-62, Phe-80–Phe-100, and Tyr-109–Gly-129. Na(+) contacts are provided by Gly-87 and Thr-90.

This sequence belongs to the fluoride channel Fluc/FEX (TC 1.A.43) family.

It is found in the cell inner membrane. It carries out the reaction fluoride(in) = fluoride(out). Its activity is regulated as follows. Na(+) is not transported, but it plays an essential structural role and its presence is essential for fluoride channel function. Its function is as follows. Fluoride-specific ion channel. Important for reducing fluoride concentration in the cell, thus reducing its toxicity. This chain is Fluoride-specific ion channel FluC 1, found in Bradyrhizobium diazoefficiens (strain JCM 10833 / BCRC 13528 / IAM 13628 / NBRC 14792 / USDA 110).